The primary structure comprises 594 residues: Invasin CotH2 (594 aa).

The signal sequence occupies residues 1–19 (MKLSLTIVSSSFLVAIAHA). N-linked (GlcNAc...) asparagine glycans are attached at residues asparagine 77, asparagine 162, asparagine 226, asparagine 316, asparagine 441, asparagine 519, and asparagine 533. The interval 529-565 (PPAANGTATSTNDGGNTHTAAGESKPASSSESSGSKI) is disordered. Positions 534–547 (GTATSTNDGGNTHT) are enriched in polar residues. Residues 548–565 (AAGESKPASSSESSGSKI) are compositionally biased toward low complexity. The GPI-anchor amidated serine moiety is linked to residue serine 571. A propeptide spans 572–594 (GASRSAVSTVLLGVTALVATAIF) (removed in mature form).

As to quaternary structure, interacts with host epithelial cell surface HSPA5/BiP protein.

It localises to the cell membrane. Its function is as follows. Promotes invasion of host epithelial cells by adhering to receptors on the host cell surface to facilitate endocytosis of the pathogen into host cells. Binds HSPA5/BiP protein on the cell surface of host epithelial cells. The protein is Invasin CotH2 of Rhizopus delemar (strain RA 99-880 / ATCC MYA-4621 / FGSC 9543 / NRRL 43880) (Mucormycosis agent).